We begin with the raw amino-acid sequence, 136 residues long: Large ribosomal subunit protein uL16c (136 aa).

It belongs to the universal ribosomal protein uL16 family. Part of the 50S ribosomal subunit.

Its subcellular location is the plastid. The protein resides in the chloroplast. This chain is Large ribosomal subunit protein uL16c, found in Mesostigma viride (Green alga).